The sequence spans 334 residues: N-acetyl-gamma-glutamyl-phosphate reductase (334 aa).

C154 is an active-site residue.

It belongs to the NAGSA dehydrogenase family. Type 1 subfamily.

The protein resides in the cytoplasm. The enzyme catalyses N-acetyl-L-glutamate 5-semialdehyde + phosphate + NADP(+) = N-acetyl-L-glutamyl 5-phosphate + NADPH + H(+). It participates in amino-acid biosynthesis; L-arginine biosynthesis; N(2)-acetyl-L-ornithine from L-glutamate: step 3/4. Functionally, catalyzes the NADPH-dependent reduction of N-acetyl-5-glutamyl phosphate to yield N-acetyl-L-glutamate 5-semialdehyde. This Escherichia coli O157:H7 protein is N-acetyl-gamma-glutamyl-phosphate reductase.